Reading from the N-terminus, the 154-residue chain is Snaclec salmorin subunit A (154 aa).

Positions 1–23 (MGRFIFVSFGLLVVFLSLSGTGA) are cleaved as a signal peptide. Intrachain disulfides connect Cys-27–Cys-38, Cys-55–Cys-152, and Cys-127–Cys-144. A C-type lectin domain is found at 34-153 (NNGHCYQAFN…CGQRNPFVCE (120 aa)). Ca(2+) contacts are provided by Ser-66, Glu-68, and Glu-72. Residue Glu-153 participates in Ca(2+) binding.

This sequence belongs to the snaclec family. In terms of assembly, heterodimer of subunits A and B; disulfide-linked. In terms of tissue distribution, expressed by the venom gland.

It is found in the secreted. Inhibits thrombin-induced fibrinogen clotting and factor Xa-induced prothrombin activation. Binds to thrombin and prothrombin exosites. The sequence is that of Snaclec salmorin subunit A from Gloydius brevicauda (Korean slamosa snake).